The chain runs to 173 residues: Co-chaperone protein HscB homolog (173 aa).

Positions Asn3–Leu75 constitute a J domain.

This sequence belongs to the HscB family. In terms of assembly, interacts with HscA and stimulates its ATPase activity.

Its function is as follows. Co-chaperone involved in the maturation of iron-sulfur cluster-containing proteins. Seems to help targeting proteins to be folded toward HscA. This chain is Co-chaperone protein HscB homolog, found in Mannheimia succiniciproducens (strain KCTC 0769BP / MBEL55E).